The following is a 296-amino-acid chain: tRNA dimethylallyltransferase (296 aa).

Position 8 to 15 (8 to 15) interacts with ATP; that stretch reads GPTGSGKT. 10-15 serves as a coordination point for substrate; it reads TGSGKT. The tract at residues 32 to 35 is interaction with substrate tRNA; the sequence is DSRQ.

This sequence belongs to the IPP transferase family. As to quaternary structure, monomer. Requires Mg(2+) as cofactor.

The catalysed reaction is adenosine(37) in tRNA + dimethylallyl diphosphate = N(6)-dimethylallyladenosine(37) in tRNA + diphosphate. Its function is as follows. Catalyzes the transfer of a dimethylallyl group onto the adenine at position 37 in tRNAs that read codons beginning with uridine, leading to the formation of N6-(dimethylallyl)adenosine (i(6)A). The polypeptide is tRNA dimethylallyltransferase (Leptospira biflexa serovar Patoc (strain Patoc 1 / Ames)).